The primary structure comprises 402 residues: Subtilisin-like protease 9 (402 aa).

A signal peptide spans 1-20 (MGFFRQLFSLSLCALSLAIP). The propeptide occupies 21–120 (SKLIGLENTQ…VEVDRVVKLD (100 aa)). The 84-residue stretch at 36-119 (SYIVVMKSTI…YVEVDRVVKL (84 aa)) folds into the Inhibitor I9 domain. The Peptidase S8 domain maps to 130 to 402 (SWGLGRISHK…RKLLYNGSGA (273 aa)). Residues Asp162 and His193 each act as charge relay system in the active site. Residue Asn254 is glycosylated (N-linked (GlcNAc...) asparagine). Ser348 functions as the Charge relay system in the catalytic mechanism. N-linked (GlcNAc...) asparagine glycosylation is found at Asn390 and Asn398.

Belongs to the peptidase S8 family.

It localises to the secreted. Its function is as follows. Secreted subtilisin-like serine protease with keratinolytic activity that contributes to pathogenicity. This Arthroderma benhamiae (strain ATCC MYA-4681 / CBS 112371) (Trichophyton mentagrophytes) protein is Subtilisin-like protease 9 (SUB9).